Reading from the N-terminus, the 1020-residue chain is Calcium-transporting ATPase 1 (1020 aa).

Residue methionine 1 is modified to N-acetylmethionine. Residues 1–162 (MESYLNENFG…NQFTESPSRG (162 aa)) lie on the Stromal side of the membrane. The tract at residues 21 to 32 (ALQRWRKLCWIV) is interaction with calmodulin. A Phosphoserine; by CPK modification is found at serine 46. The helical transmembrane segment at 163–183 (FWLFVWEALQDTTLMILAACA) threads the bilayer. At 184–201 (FVSLIVGILMEGWPIGAH) the chain is on the lumenal side. The chain crosses the membrane as a helical span at residues 202–222 (DGLGIVASILLVVFVTATSDY). The Stromal segment spans residues 223 to 350 (RQSLQFKDLD…DDETPLQVKL (128 aa)). A helical transmembrane segment spans residues 351–370 (NGVATIIGKIGLFFAVITFA). The Lumenal portion of the chain corresponds to 371 to 400 (VLVQGLANQKRLDNSHWIWTADELMAMLEY). Residues 401–418 (FAVAVTIVVVAVPEGLPL) form a helical membrane-spanning segment. At 419–813 (AVTLSLAFAM…KWGRSVYINI (395 aa)) the chain is on the stromal side. The 4-aspartylphosphate intermediate role is filled by aspartate 456. Mg(2+) is bound by residues aspartate 758 and aspartate 762. Residues 814-832 (QKFVQFQLTVNVVALIVNF) form a helical membrane-spanning segment. The Lumenal portion of the chain corresponds to 833–843 (LSACLTGNAPL). The chain crosses the membrane as a helical span at residues 844–864 (TAVQLLWVNMIMDTLGALALA). The Stromal segment spans residues 865–884 (TEPPQDDLMKRSPVGRKGNF). The chain crosses the membrane as a helical span at residues 885–907 (ISNVMWRNILGQSLYQLVIIWCL). Over 908–919 (QTKGKTMFGLDG) the chain is Lumenal. The chain crosses the membrane as a helical span at residues 920 to 941 (PDSDLTLNTLIFNIFVFCQVFN). The Stromal segment spans residues 942–959 (EISSREMEKIDVFKGILK). A helical transmembrane segment spans residues 960–981 (NYVFVAVLTCTVVFQVIIIELL). Topologically, residues 982-991 (GTFADTTPLN) are lumenal. Residues 992–1013 (LGQWLVSIILGFLGMPVAAALK) traverse the membrane as a helical segment. Topologically, residues 1014–1020 (MIPVGSH) are stromal.

This sequence belongs to the cation transport ATPase (P-type) (TC 3.A.3) family. Type IIB subfamily. Expressed at higher levels in roots than in leaves.

Its subcellular location is the plastid. The protein resides in the chloroplast inner membrane. It carries out the reaction Ca(2+)(in) + ATP + H2O = Ca(2+)(out) + ADP + phosphate + H(+). Its activity is regulated as follows. Activated by calmodulin. Its function is as follows. This magnesium-dependent enzyme catalyzes the hydrolysis of ATP coupled with the translocation of calcium from the cytosol out of the cell or into organelles. The chain is Calcium-transporting ATPase 1 (ACA1) from Arabidopsis thaliana (Mouse-ear cress).